Consider the following 582-residue polypeptide: SUMO-activating enzyme subunit uba-2 (582 aa).

ATP contacts are provided by residues 20 to 25 (GAGGIG), Asp-44, 52 to 55 (NLNR), Lys-68, 91 to 92 (SI), and 113 to 118 (DNRAAR). Residues Cys-154 and Cys-157 each coordinate Zn(2+). Cys-170 acts as the Glycyl thioester intermediate in catalysis. The segment covering 204-214 (SPDMDAVDPDN) has biased composition (acidic residues). The segment at 204–235 (SPDMDAVDPDNTEAVTTEKEKEAMKEEPAPVG) is disordered. A compositionally biased stretch (basic and acidic residues) spans 219–231 (TTEKEKEAMKEEP). Positions 431 and 434 each coordinate Zn(2+). Positions 531 to 570 (FEVARSEKEPEPDDRKRKADGSEEPEAKRQKVEEKDDKNG) are enriched in basic and acidic residues. A disordered region spans residues 531 to 582 (FEVARSEKEPEPDDRKRKADGSEEPEAKRQKVEEKDDKNGNEAVAEITETMA).

This sequence belongs to the ubiquitin-activating E1 family. Heterodimer with aos-1.

The protein operates within protein modification; protein sumoylation. Functionally, the dimeric enzyme acts as an E1 ligase for smo-1. It mediates ATP-dependent activation of smo-1 and formation of a thioester with a conserved cysteine residue on uba-2. The protein is SUMO-activating enzyme subunit uba-2 (uba-2) of Caenorhabditis elegans.